Consider the following 158-residue polypeptide: SsrA-binding protein (158 aa).

This sequence belongs to the SmpB family.

The protein localises to the cytoplasm. Functionally, required for rescue of stalled ribosomes mediated by trans-translation. Binds to transfer-messenger RNA (tmRNA), required for stable association of tmRNA with ribosomes. tmRNA and SmpB together mimic tRNA shape, replacing the anticodon stem-loop with SmpB. tmRNA is encoded by the ssrA gene; the 2 termini fold to resemble tRNA(Ala) and it encodes a 'tag peptide', a short internal open reading frame. During trans-translation Ala-aminoacylated tmRNA acts like a tRNA, entering the A-site of stalled ribosomes, displacing the stalled mRNA. The ribosome then switches to translate the ORF on the tmRNA; the nascent peptide is terminated with the 'tag peptide' encoded by the tmRNA and targeted for degradation. The ribosome is freed to recommence translation, which seems to be the essential function of trans-translation. In Caldanaerobacter subterraneus subsp. tengcongensis (strain DSM 15242 / JCM 11007 / NBRC 100824 / MB4) (Thermoanaerobacter tengcongensis), this protein is SsrA-binding protein.